Here is a 1798-residue protein sequence, read N- to C-terminus: MELTSRERGRGQPLPWELRLGLLLSVLAATLAQAPAPDVPGCSRGSCYPATGDLLVGRADRLTASSTCGLNGPQPYCIVSHLQDEKKCFLCDSRRPFSARDNPHSHRIQNVVTSFAPQRRAAWWQSENGIPAVTIQLDLEAEFHFTHLIMTFKTFRPAAMLVERSADFGRTWHVYRYFSYDCGADFPGVPLAPPRHWDDVVCESRYSEIEPSTEGEVIYRVLDPAIPIPDPYSSRIQNLLKITNLRVNLTRLHTLGDNLLDPRREIREKYYYALYELVVRGNCFCYGHASECAPAPGAPAHAEGMVHGACICKHNTRGLNCEQCQDFYRDLPWRPAEDGHSHACRKCECHGHTHSCHFDMAVYLASGNVSGGVCDGCQHNTAGRHCELCRPFFYRDPTKDLRDPAVCRSCDCDPMGSQDGGRCDSHDDPALGLVSGQCRCKEHVVGTRCQQCRDGFFGLSISDRLGCRRCQCNARGTVPGSTPCDPNSGSCYCKRLVTGRGCDRCLPGHWGLSHDLLGCRPCDCDVGGALDPQCDEGTGQCHCRQHMVGRRCEQVQPGYFRPFLDHLIWEAEDTRGQVLDVVERLVTPGETPSWTGSGFVRLQEGQTLEFLVASVPKAMDYDLLLRLEPQVPEQWAELELIVQRPGPVPAHSLCGHLVPKDDRIQGTLQPHARYLIFPNPVCLEPGISYKLHLKLVRTGGSAQPETPYSGPGLLIDSLVLLPRVLVLEMFSGGDAAALERQATFERYQCHEEGLVPSKTSPSEACAPLLISLSTLIYNGALPCQCNPQGSLSSECNPHGGQCLCKPGVVGRRCDLCAPGYYGFGPTGCQACQCSHEGALSSLCEKTSGQCLCRTGAFGLRCDRCQRGQWGFPSCRPCVCNGHADECNTHTGACLGCRDHTGGEHCERCIAGFHGDPRLPYGGQCRPCPCPEGPGSQRHFATSCHQDEYSQQIVCHCRAGYTGLRCEACAPGHFGDPSRPGGRCQLCECSGNIDPMDPDACDPHTGQCLRCLHHTEGPHCAHCKPGFHGQAARQSCHRCTCNLLGTNPQQCPSPDQCHCDPSSGQCPCLPNVQGPSCDRCAPNFWNLTSGHGCQPCACHPSRARGPTCNEFTGQCHCRAGFGGRTCSECQELHWGDPGLQCHACDCDSRGIDTPQCHRFTGHCSCRPGVSGVRCDQCARGFSGIFPACHPCHACFGDWDRVVQDLAARTQRLEQRAQELQQTGVLGAFESSFWHMQEKLGIVQGIVGARNTSAASTAQLVEATEELRREIGEATEHLTQLEADLTDVQDENFNANHALSGLERDRLALNLTLRQLDQHLDLLKHSNFLGAYDSIRHAHSQSAEAERRANTSALAVPSPVSNSASARHRTEALMDAQKEDFNSKHMANQRALGKLSAHTHTLSLTDINELVCGAPGDAPCATSPCGGAGCRDEDGQPRCGGLSCNGAAATADLALGRARHTQAELQRALAEGGSILSRVAETRRQASEAQQRAQAALDKANASRGQVEQANQELQELIQSVKDFLNQEGADPDSIEMVATRVLELSIPASAEQIQHLAGAIAERVRSLADVDAILARTVGDVRRAEQLLQDARRARSWAEDEKQKAETVQAALEEAQRAQGIAQGAIRGAVADTRDTEQTLYQVQERMAGAERALSSAGERARQLDALLEALKLKRAGNSLAASTAEETAGSAQGRAQEAEQLLRGPLGDQYQTVKALAERKAQGVLAAQARAEQLRDEARDLLQAAQDKLQRLQELEGTYEENERALESKAAQLDGLEARMRSVLQAINLQVQIYNTCQ.

The N-terminal stretch at 1 to 32 (MELTSRERGRGQPLPWELRLGLLLSVLAATLA) is a signal peptide. Residues 43–282 (SRGSCYPATG…ALYELVVRGN (240 aa)) enclose the Laminin N-terminal domain. N-linked (GlcNAc...) asparagine glycosylation occurs at N248. 19 disulfides stabilise this stretch: C283–C292, C285–C310, C312–C321, C324–C344, C347–C356, C349–C374, C377–C386, C389–C407, C410–C423, C412–C438, C440–C449, C452–C467, C470–C484, C472–C491, C493–C502, C505–C519, C522–C534, C524–C541, and C543–C552. 4 Laminin EGF-like domains span residues 283-346 (CFCY…ACRK), 347-409 (CECH…VCRS), 410-469 (CDCD…GCRR), and 470-521 (CQCN…GCRP). N368 carries N-linked (GlcNAc...) asparagine glycosylation. A Laminin EGF-like 5; truncated domain is found at 522 to 552 (CDCDVGGALDPQCDEGTGQCHCRQHMVGRRC). The region spanning 561 to 777 (RPFLDHLIWE…LLISLSTLIY (217 aa)) is the Laminin IV type B domain. 32 cysteine pairs are disulfide-bonded: C783–C795, C785–C802, C804–C813, C816–C828, C831–C843, C833–C850, C852–C861, C864–C874, C877–C886, C879–C893, C896–C905, C908–C924, C927–C943, C929–C954, C956–C965, C968–C983, C986–C1000, C988–C1007, C1010–C1019, C1022–C1035, C1038–C1058, C1040–C1065, C1067–C1076, C1079–C1092, C1095–C1107, C1097–C1114, C1116–C1125, C1128–C1140, C1143–C1155, C1145–C1162, C1164–C1173, and C1176–C1187. 8 Laminin EGF-like domains span residues 783-830 (CQCN…GCQA), 831-876 (CQCS…SCRP), 877-926 (CVCN…QCRP), 927-985 (CPCP…RCQL), 986-1037 (CECS…SCHR), 1038-1094 (CTCN…GCQP), 1095-1142 (CACH…QCHA), and 1143-1189 (CDCD…ACHP). An N-linked (GlcNAc...) asparagine glycan is attached at N1085. The tract at residues 1190–1409 (CHACFGDWDR…LSLTDINELV (220 aa)) is domain II. N1249, N1308, and N1348 each carry an N-linked (GlcNAc...) asparagine glycan. Positions 1253–1319 (ASTAQLVEAT…TLRQLDQHLD (67 aa)) form a coiled coil. The disordered stretch occupies residues 1338 to 1364 (SQSAEAERRANTSALAVPSPVSNSASA). Residues 1350–1363 (SALAVPSPVSNSAS) are compositionally biased toward low complexity. A domain alpha region spans residues 1410 to 1442 (CGAPGDAPCATSPCGGAGCRDEDGQPRCGGLSC). Residues 1443 to 1798 (NGAAATADLA…LQVQIYNTCQ (356 aa)) are domain I. The stretch at 1472–1526 (SILSRVAETRRQASEAQQRAQAALDKANASRGQVEQANQELQELIQSVKDFLNQE) forms a coiled coil. N1499 carries an N-linked (GlcNAc...) asparagine glycan. Residue S1532 is modified to Phosphoserine; by FAM20C. Residues 1577–1790 (VGDVRRAEQL…RSVLQAINLQ (214 aa)) are a coiled coil.

As to quaternary structure, laminin is a complex glycoprotein, consisting of three different polypeptide chains (alpha, beta, gamma), which are bound to each other by disulfide bonds into a cross-shaped molecule comprising one long and three short arms with globules at each end. Beta-2 is a subunit of laminin-3 (laminin-121 or S-laminin), laminin-4 (laminin-221 or S-merosin), laminin-7 (laminin-321 or KS-laminin), laminin-9 (laminin-421), laminin-11 (laminin-521), laminin-14 (laminin-423) and laminin-15 (laminin-523).

The protein localises to the secreted. Its subcellular location is the extracellular space. It is found in the extracellular matrix. The protein resides in the basement membrane. Functionally, binding to cells via a high affinity receptor, laminin is thought to mediate the attachment, migration and organization of cells into tissues during embryonic development by interacting with other extracellular matrix components. The sequence is that of Laminin subunit beta-2 (LAMB2) from Homo sapiens (Human).